A 338-amino-acid chain; its full sequence is Glyceraldehyde-3-phosphate dehydrogenase GAPC2, cytosolic (338 aa).

Residues Arg-15–Ile-16, Asp-37, and Arg-84 contribute to the NAD(+) site. Position 155 to 157 (Ser-155 to Thr-157) interacts with D-glyceraldehyde 3-phosphate. The active-site Nucleophile is Cys-156. Cys-156 carries the post-translational modification S-glutathionyl cysteine; transient; alternate. The residue at position 156 (Cys-156) is an S-nitrosocysteine; transient; alternate. Cys-160 is modified (S-nitrosocysteine; transient). Residues Thr-186, Thr-215–Gly-216, and Arg-238 each bind D-glyceraldehyde 3-phosphate. NAD(+) is bound at residue Asn-320.

Belongs to the glyceraldehyde-3-phosphate dehydrogenase family. As to quaternary structure, homotetramer. Interacts with PLDDELTA. Binds to DPB3-1/NF-YC10 in response to heat-stress; this interaction promotes DPB3-1/NF-YC10 DNA-binding ability to its target promoter. Post-translationally, S-glutathionylation at Cys-156 in the presence of oxidized glutathione (GSSG). S-nitrosylation at Cys-156 and Cys-160 in the presence of S-nitrosoglutathione (GSNO) or sodium nitroprusside (SNP). These reactions may be both a protective mechanism against irreversible oxidation and a mean to store inhibited enzyme in a recoverable form.

The protein resides in the cytoplasm. Its subcellular location is the nucleus. The enzyme catalyses D-glyceraldehyde 3-phosphate + phosphate + NAD(+) = (2R)-3-phospho-glyceroyl phosphate + NADH + H(+). The protein operates within carbohydrate degradation; glycolysis; pyruvate from D-glyceraldehyde 3-phosphate: step 1/5. With respect to regulation, inhibition by oxidized glutathione (GSSG), S-nitrosoglutathione (GSNO) and hydrogen peroxide. Its function is as follows. Key enzyme in glycolysis that catalyzes the first step of the pathway by converting D-glyceraldehyde 3-phosphate (G3P) into 3-phospho-D-glyceroyl phosphate. Essential for the maintenance of cellular ATP levels and carbohydrate metabolism. Binds DNA in vitro. Together with DNA polymerase II subunit B3-1 (DPB3-1) and GAPC1, enhances heat tolerance and promotes the expression of heat-inducible genes. The polypeptide is Glyceraldehyde-3-phosphate dehydrogenase GAPC2, cytosolic (Arabidopsis thaliana (Mouse-ear cress)).